Consider the following 264-residue polypeptide: MIPYHDLLERILSDGAEKHDRTGTGTLSVFGHQLRFDLAAGFPMLTTKRLPLKAIIHELLWFLQGDTNIKYLHDHGVTIWDEWADANGDLGPVYGAQWRSWPTADGRSIDQIAHVVDMIRRNPDSRRLIVTAWNPADVEKMALPPCHCLFQFYVANGRLSCQLYQRSADVFLGVPFNIASYALLTMMVAQVTGLKPGDFIHTLGDAHLYSNHLEQARLQLTRAPRALPAMAINPAVTDIFGFRYEDFTLHGYDPHPHIKAEVAV.

Residues arginine 21 and 126–127 contribute to the dUMP site; that span reads RR. Cysteine 146 serves as the catalytic Nucleophile. DUMP-binding positions include 166–169, asparagine 177, and 207–209; these read RSAD and HLY. Aspartate 169 provides a ligand contact to (6R)-5,10-methylene-5,6,7,8-tetrahydrofolate. Position 263 (alanine 263) interacts with (6R)-5,10-methylene-5,6,7,8-tetrahydrofolate.

The protein belongs to the thymidylate synthase family. Bacterial-type ThyA subfamily. As to quaternary structure, homodimer.

Its subcellular location is the cytoplasm. It carries out the reaction dUMP + (6R)-5,10-methylene-5,6,7,8-tetrahydrofolate = 7,8-dihydrofolate + dTMP. Its pathway is pyrimidine metabolism; dTTP biosynthesis. Catalyzes the reductive methylation of 2'-deoxyuridine-5'-monophosphate (dUMP) to 2'-deoxythymidine-5'-monophosphate (dTMP) while utilizing 5,10-methylenetetrahydrofolate (mTHF) as the methyl donor and reductant in the reaction, yielding dihydrofolate (DHF) as a by-product. This enzymatic reaction provides an intracellular de novo source of dTMP, an essential precursor for DNA biosynthesis. The sequence is that of Thymidylate synthase from Rhodopseudomonas palustris (strain HaA2).